A 192-amino-acid polypeptide reads, in one-letter code: MRRAEVQRTTLETMINVEFTMDGNGEFSGTSGLGFFDHMLTLFCKFGGFNLNLSCQGDLEVDDHHTVEDIGLVLGEAFSKALGDKKGIARFASGFYPMDEALMLIAVDISGRPYLAFEADFPPVLAGKFNYQMVEEFLRGFVQKAGITLHVREISGKNLHHKAEAIFKGLGRTLKVAVSVQGDELPSTKGVI.

Belongs to the imidazoleglycerol-phosphate dehydratase family.

It localises to the cytoplasm. It carries out the reaction D-erythro-1-(imidazol-4-yl)glycerol 3-phosphate = 3-(imidazol-4-yl)-2-oxopropyl phosphate + H2O. Its pathway is amino-acid biosynthesis; L-histidine biosynthesis; L-histidine from 5-phospho-alpha-D-ribose 1-diphosphate: step 6/9. This Carboxydothermus hydrogenoformans (strain ATCC BAA-161 / DSM 6008 / Z-2901) protein is Imidazoleglycerol-phosphate dehydratase.